The following is a 54-amino-acid chain: SPbeta prophage-derived uncharacterized protein YoqE (54 aa).

The polypeptide is SPbeta prophage-derived uncharacterized protein YoqE (yoqE) (Bacillus subtilis (strain 168)).